A 332-amino-acid chain; its full sequence is tRNA U34 carboxymethyltransferase (332 aa).

Residues lysine 91, tryptophan 105, lysine 110, glycine 130, 152 to 154 (DPS), 181 to 182 (IE), methionine 196, tyrosine 200, and arginine 315 each bind carboxy-S-adenosyl-L-methionine.

Belongs to the class I-like SAM-binding methyltransferase superfamily. CmoB family. As to quaternary structure, homotetramer.

It catalyses the reaction carboxy-S-adenosyl-L-methionine + 5-hydroxyuridine(34) in tRNA = 5-carboxymethoxyuridine(34) in tRNA + S-adenosyl-L-homocysteine + H(+). Its function is as follows. Catalyzes carboxymethyl transfer from carboxy-S-adenosyl-L-methionine (Cx-SAM) to 5-hydroxyuridine (ho5U) to form 5-carboxymethoxyuridine (cmo5U) at position 34 in tRNAs. The chain is tRNA U34 carboxymethyltransferase from Shewanella sp. (strain W3-18-1).